The primary structure comprises 877 residues: Leucine--tRNA ligase (877 aa).

The 'HIGH' region motif lies at 48–58 (PYPSGKLHMGH). The short motif at 636–640 (KMSKS) is the 'KMSKS' region element. Lys639 contacts ATP.

Belongs to the class-I aminoacyl-tRNA synthetase family.

The protein resides in the cytoplasm. It carries out the reaction tRNA(Leu) + L-leucine + ATP = L-leucyl-tRNA(Leu) + AMP + diphosphate. This chain is Leucine--tRNA ligase, found in Ralstonia nicotianae (strain ATCC BAA-1114 / GMI1000) (Ralstonia solanacearum).